Here is a 449-residue protein sequence, read N- to C-terminus: MFKTLTQNLMKIFDRLVSSGLLTEEQIDAALRDIRVALLESDVALPVIKNFVAEVKQKALGQEVIKSVSPGQMIIKIIHEEMINILSSSEDEIKLNLNAKPPVNLLMVGLQGSGKTTASGKLALCLKNQNKKVLLVSLDTYRPAAQEQLEILANSVKINSLPIVKGEKPLDIVKRAMAEAKLSAYDIVIYDTAGRTQIDQEMMNEAIAIKKIVEPTETLLVIDSMTGQDAVVTASSFNEQLEISGLILSRIDGDSKGGAALSVKYITQRPIKFLSSGEKLTDLEEFDAKRIASRILDMGDIISFVEKAASIVDREQAEKTAAKLKKGKFDLNDYLQQMKSIKKIGGFGSILSMLPGSGKIMDQIDQSKLNSKIIEHQEAIILSMTPKERRNPDIINASRRKRIALGAGTTVQKVNILLKQFKQISDMMKKASNMNPKNLLRSGLGKLFS.

GTP is bound by residues glycine 109–threonine 116, aspartate 191–arginine 195, and serine 249–aspartate 252.

This sequence belongs to the GTP-binding SRP family. SRP54 subfamily. Part of the signal recognition particle protein translocation system, which is composed of SRP and FtsY. SRP is a ribonucleoprotein composed of Ffh and a 4.5S RNA molecule.

The protein resides in the cytoplasm. The enzyme catalyses GTP + H2O = GDP + phosphate + H(+). Its function is as follows. Involved in targeting and insertion of nascent membrane proteins into the cytoplasmic membrane. Binds to the hydrophobic signal sequence of the ribosome-nascent chain (RNC) as it emerges from the ribosomes. The SRP-RNC complex is then targeted to the cytoplasmic membrane where it interacts with the SRP receptor FtsY. Interaction with FtsY leads to the transfer of the RNC complex to the Sec translocase for insertion into the membrane, the hydrolysis of GTP by both Ffh and FtsY, and the dissociation of the SRP-FtsY complex into the individual components. The polypeptide is Signal recognition particle protein (Rickettsia bellii (strain RML369-C)).